A 215-amino-acid polypeptide reads, in one-letter code: Osmoprotectant import permease protein OsmW (215 aa).

One can recognise an ABC transmembrane type-1 domain in the interval threonine 18–leucine 202. The next 6 membrane-spanning stretches (helical) occupy residues leucine 24–valine 44, threonine 51–isoleucine 73, leucine 78–isoleucine 100, tryptophan 132–methionine 152, asparagine 153–leucine 173, and methionine 183–histidine 203.

Belongs to the binding-protein-dependent transport system permease family. The complex is composed of two ATP-binding proteins (OsmV), two transmembrane proteins (OsmW and OsmY) and a solute-binding protein (OsmX).

It is found in the cell inner membrane. Part of the OsmU ABC transporter complex, which is involved in the uptake of osmoprotectants such as choline-O-sulfate and glycine betaine. Probably responsible for the translocation of the substrate across the membrane. The protein is Osmoprotectant import permease protein OsmW (osmW) of Salmonella typhimurium (strain LT2 / SGSC1412 / ATCC 700720).